Reading from the N-terminus, the 345-residue chain is Polyprenyl transferase dpmpC (345 aa).

8 consecutive transmembrane segments (helical) span residues 24–44, 60–80, 101–121, 183–203, 220–240, 261–281, 286–306, and 319–339; these read PVFA…ARLA, GLCF…NDWV, VTTF…WYLL, LYVY…VIGW, CLPL…AYSY, HLHL…LLFL, SFWL…EQLI, and LHKS…VELL.

This sequence belongs to the UbiA prenyltransferase family. The cofactor is Mg(2+).

The protein resides in the membrane. Its pathway is secondary metabolite biosynthesis; terpenoid biosynthesis. Functionally, polyprenyl transferase; part of the gene cluster that mediates the biosynthesis of diterpenoid pyrones. The first step of the pathway is the synthesis of the alpha-pyrone moiety by the polyketide synthase dpmpA via condensation of one acetyl-CoA starter unit with 3 malonyl-CoA units and 2 methylations. The alpha-pyrone is then combined with geranylgeranyl pyrophosphate (GGPP) formed by the GGPP synthase dpmpD through the action of the prenyltransferase dpmpC to yield a linear alpha-pyrone diterpenoid. Subsequent steps in the diterpenoid pyrone biosynthetic pathway involve the decalin core formation, which is initiated by the epoxidation of the C10-C11 olefin by the FAD-dependent oxidoreductase dpmpE, and is followed by a cyclization cascade catalyzed by the terpene cyclase dpmpB. The short chain dehydrogenase/reductase dpmpG then oxidizes the 8S hydroxy group to a ketone and the short chain dehydrogenase/reductase dpmpH reduces the ketone to the 8R hydroxy group to yield higginsianin B. Higginsianin B is further methylated by the methyltransferase dpmpI to produce the intermediate named FDDP B. The cytochrome P450 monooxygenase dpmpJ then oxidizes the C-26 methyl to primary alcohol, producing the final diterpenoid pyrone with a C-26 primary alcohol on the gamma-pyrone moiety named FDDP C. The chain is Polyprenyl transferase dpmpC from Macrophomina phaseolina (strain MS6) (Charcoal rot fungus).